A 318-amino-acid polypeptide reads, in one-letter code: Protein FAM228A (318 aa).

Residues 259–297 are disordered; the sequence is SQESKRHEKKGLALGTGQHRPRSWAAGEGQQRRRSQPVD.

Belongs to the FAM228 family.

In Bos taurus (Bovine), this protein is Protein FAM228A (FAM228A).